The primary structure comprises 111 residues: U-scoloptoxin(16)-Er8a (111 aa).

Residues Met-1–Gly-26 form the signal peptide.

It belongs to the scoloptoxin-16 family. Post-translationally, contains 4 disulfide bonds. In terms of tissue distribution, expressed by the venom gland.

The protein localises to the secreted. The sequence is that of U-scoloptoxin(16)-Er8a from Ethmostigmus rubripes (Giant centipede).